The sequence spans 249 residues: Globin-like protein 9 (249 aa).

The disordered stretch occupies residues 20 to 43; it reads TNKGPNGLARRGTQRGCSRSKSTR. A Globin domain is found at 52–205; the sequence is SLTFSQKQAL…LIDELRGGFE (154 aa). Heme-binding residues include His116 and His148.

Belongs to the globin family.

This is Globin-like protein 9 (glb-9) from Caenorhabditis elegans.